Reading from the N-terminus, the 26-residue chain is Unknown protein 16 (26 aa).

Residues 1-26 (AINSESGVRSVVPQPCNALPNQGPEK) are disordered.

In Pseudotsuga menziesii (Douglas-fir), this protein is Unknown protein 16.